Consider the following 522-residue polypeptide: Serine/threonine-protein kinase pak-2 (522 aa).

In terms of domain architecture, CRIB spans isoleucine 16–glycine 29. Positions threonine 183–lysine 204 are enriched in polar residues. A disordered region spans residues threonine 183–glycine 208. In terms of domain architecture, Protein kinase spans leucine 231–phenylalanine 482. ATP-binding positions include isoleucine 237 to valine 245 and lysine 260. Catalysis depends on aspartate 350, which acts as the Proton acceptor.

The protein belongs to the protein kinase superfamily. STE Ser/Thr protein kinase family. STE20 subfamily. Requires Mg(2+) as cofactor. It depends on Mn(2+) as a cofactor. As to expression, expressed in pharynx, vulva and spermatheca. Unlike other p21-activated kinases, expression is not detected in neurons.

The enzyme catalyses L-seryl-[protein] + ATP = O-phospho-L-seryl-[protein] + ADP + H(+). It catalyses the reaction L-threonyl-[protein] + ATP = O-phospho-L-threonyl-[protein] + ADP + H(+). Functionally, serine/threonine-protein kinase which plays a redundant role with pak-1 in embryogenesis but, in contrast to pak-1, is not involved in commissural axon guidance of ventral cord motoneurons or in distal tip cell (DTC) migration. This chain is Serine/threonine-protein kinase pak-2, found in Caenorhabditis elegans.